Here is a 74-residue protein sequence, read N- to C-terminus: MDIAAAREIGAGIAVIALAGVGIGLGNIFSTLVSSIARNPAARPHVFGLGMLGFALTEAVALYALLIAFLILFV.

Transmembrane regions (helical) follow at residues 9 to 29 (IGAGIAVIALAGVGIGLGNIF) and 54 to 74 (FALTEAVALYALLIAFLILFV).

Belongs to the ATPase C chain family. F-type ATPases have 2 components, F(1) - the catalytic core - and F(0) - the membrane proton channel. F(1) has five subunits: alpha(3), beta(3), gamma(1), delta(1), epsilon(1). F(0) has three main subunits: a(1), b(2) and c(10-14). The alpha and beta chains form an alternating ring which encloses part of the gamma chain. F(1) is attached to F(0) by a central stalk formed by the gamma and epsilon chains, while a peripheral stalk is formed by the delta and b chains.

The protein localises to the cell inner membrane. F(1)F(0) ATP synthase produces ATP from ADP in the presence of a proton or sodium gradient. F-type ATPases consist of two structural domains, F(1) containing the extramembraneous catalytic core and F(0) containing the membrane proton channel, linked together by a central stalk and a peripheral stalk. During catalysis, ATP synthesis in the catalytic domain of F(1) is coupled via a rotary mechanism of the central stalk subunits to proton translocation. Functionally, key component of the F(0) channel; it plays a direct role in translocation across the membrane. A homomeric c-ring of between 10-14 subunits forms the central stalk rotor element with the F(1) delta and epsilon subunits. The chain is ATP synthase subunit c from Gluconacetobacter diazotrophicus (strain ATCC 49037 / DSM 5601 / CCUG 37298 / CIP 103539 / LMG 7603 / PAl5).